A 380-amino-acid chain; its full sequence is Fibromodulin (380 aa).

The N-terminal stretch at 1–18 (MRWANILLVAGLCRASLG) is a signal peptide. Residues 71–109 (EAQQASSWQCPQECDCPPNFSSAMYCDTRNLRYLPFVPT) form the LRRNT domain. N-linked (GlcNAc...) asparagine glycosylation is present at N89. LRR repeat units lie at residues 110–131 (RMKY…AFDN), 134–147 (ELEW…QISS), 160–180 (NLER…PLPR), 181–202 (SLRE…ALEG), 205–227 (NLTA…KGLK), 228–248 (SLIL…GLPM), 249–270 (ALEQ…YFKV), and 273–293 (KLLY…STNT). N-linked (GlcNAc...) (keratan sulfate) asparagine glycosylation is present at N131. N-linked (GlcNAc...) (keratan sulfate) asparagine glycosylation occurs at N170. N-linked (GlcNAc...) (keratan sulfate) asparagine glycosylation is present at N205. An N-linked (GlcNAc...) (keratan sulfate) asparagine glycan is attached at N295. 2 LRR repeats span residues 298–317 (SILE…RVST) and 318–339 (NLEN…SFCT). An intrachain disulfide couples C338 to C371. Residue N345 is glycosylated (N-linked (GlcNAc...) asparagine). An LRR 11 repeat occupies 348 to 371 (RLQVLRLDGNEIKRNAMPPDAPLC).

Belongs to the small leucine-rich proteoglycan (SLRP) family. SLRP class II subfamily. Binds to type I and type II collagen. Binds keratan sulfate chains.

The protein resides in the secreted. Its subcellular location is the extracellular space. It localises to the extracellular matrix. Affects the rate of fibrils formation. May have a primary role in collagen fibrillogenesis. In Gallus gallus (Chicken), this protein is Fibromodulin (FMOD).